A 315-amino-acid chain; its full sequence is Ribose-phosphate pyrophosphokinase (315 aa).

ATP is bound by residues 40 to 42 (DGE) and 99 to 100 (RQ). 2 residues coordinate Mg(2+): H133 and D175. The active site involves K198. D-ribose 5-phosphate is bound by residues R200, D224, and 228–232 (DTAHS).

The protein belongs to the ribose-phosphate pyrophosphokinase family. Class I subfamily. As to quaternary structure, homohexamer. The cofactor is Mg(2+).

It localises to the cytoplasm. The catalysed reaction is D-ribose 5-phosphate + ATP = 5-phospho-alpha-D-ribose 1-diphosphate + AMP + H(+). Its pathway is metabolic intermediate biosynthesis; 5-phospho-alpha-D-ribose 1-diphosphate biosynthesis; 5-phospho-alpha-D-ribose 1-diphosphate from D-ribose 5-phosphate (route I): step 1/1. Involved in the biosynthesis of the central metabolite phospho-alpha-D-ribosyl-1-pyrophosphate (PRPP) via the transfer of pyrophosphoryl group from ATP to 1-hydroxyl of ribose-5-phosphate (Rib-5-P). The sequence is that of Ribose-phosphate pyrophosphokinase from Thermotoga maritima (strain ATCC 43589 / DSM 3109 / JCM 10099 / NBRC 100826 / MSB8).